A 381-amino-acid polypeptide reads, in one-letter code: L-lactate dehydrogenase (381 aa).

An FMN hydroxy acid dehydrogenase domain is found at Met-1 to Lys-380. A substrate-binding site is contributed by Tyr-24. 2 residues coordinate FMN: Ser-106 and Gln-127. Tyr-129 is a substrate binding site. Residue Thr-155 coordinates FMN. Substrate is bound at residue Arg-164. Lys-251 is an FMN binding site. His-275 functions as the Proton acceptor in the catalytic mechanism. Substrate is bound at residue Arg-278. Asp-306–Arg-330 contributes to the FMN binding site.

Belongs to the FMN-dependent alpha-hydroxy acid dehydrogenase family. Requires FMN as cofactor.

The protein localises to the cell inner membrane. It catalyses the reaction (S)-lactate + A = pyruvate + AH2. In terms of biological role, catalyzes the conversion of L-lactate to pyruvate. Is coupled to the respiratory chain. This is L-lactate dehydrogenase from Actinobacillus pleuropneumoniae serotype 3 (strain JL03).